Reading from the N-terminus, the 289-residue chain is Digeranylgeranylglyceryl phosphate synthase (289 aa).

8 consecutive transmembrane segments (helical) span residues 17–37 (CLMA…ILTS), 50–70 (LFSS…GNAI), 106–126 (FALG…IALF), 141–161 (TPLL…LFGA), 163–183 (VFGL…ALAI), 221–241 (LIGF…MLGL), 243–263 (YLYL…QLLA), and 269–289 (KSSK…IAGV).

This sequence belongs to the UbiA prenyltransferase family. DGGGP synthase subfamily. The cofactor is Mg(2+).

It is found in the cell membrane. It carries out the reaction sn-3-O-(geranylgeranyl)glycerol 1-phosphate + (2E,6E,10E)-geranylgeranyl diphosphate = 2,3-bis-O-(geranylgeranyl)-sn-glycerol 1-phosphate + diphosphate. The protein operates within membrane lipid metabolism; glycerophospholipid metabolism. In terms of biological role, prenyltransferase that catalyzes the transfer of the geranylgeranyl moiety of geranylgeranyl diphosphate (GGPP) to the C2 hydroxyl of (S)-3-O-geranylgeranylglyceryl phosphate (GGGP). This reaction is the second ether-bond-formation step in the biosynthesis of archaeal membrane lipids. This Methanosarcina barkeri (strain Fusaro / DSM 804) protein is Digeranylgeranylglyceryl phosphate synthase.